The primary structure comprises 568 residues: Urocanate hydratase (568 aa).

NAD(+) is bound by residues 58–59, Gln136, 182–184, Glu202, Arg207, 248–249, 269–273, 279–280, and Tyr328; these read GG, GMG, NA, QTSAH, and YL. Cys416 is an active-site residue. Gly498 serves as a coordination point for NAD(+).

This sequence belongs to the urocanase family. It depends on NAD(+) as a cofactor.

The protein resides in the cytoplasm. The catalysed reaction is 4-imidazolone-5-propanoate = trans-urocanate + H2O. Its pathway is amino-acid degradation; L-histidine degradation into L-glutamate; N-formimidoyl-L-glutamate from L-histidine: step 2/3. Catalyzes the conversion of urocanate to 4-imidazolone-5-propionate. This is Urocanate hydratase from Photobacterium profundum (strain SS9).